The following is a 396-amino-acid chain: Alanine racemase (396 aa).

Lys46 serves as the catalytic Proton acceptor; specific for D-alanine. The residue at position 46 (Lys46) is an N6-(pyridoxal phosphate)lysine. Arg145 provides a ligand contact to substrate. Tyr280 (proton acceptor; specific for L-alanine) is an active-site residue. Met328 contributes to the substrate binding site.

This sequence belongs to the alanine racemase family. The cofactor is pyridoxal 5'-phosphate.

The enzyme catalyses L-alanine = D-alanine. The protein operates within amino-acid biosynthesis; D-alanine biosynthesis; D-alanine from L-alanine: step 1/1. Its function is as follows. Catalyzes the interconversion of L-alanine and D-alanine. May also act on other amino acids. In Brucella ovis (strain ATCC 25840 / 63/290 / NCTC 10512), this protein is Alanine racemase (alr).